A 162-amino-acid polypeptide reads, in one-letter code: Crossover junction endodeoxyribonuclease RuvC (162 aa).

Residues Asp7, Glu67, and Asp140 contribute to the active site. Residues Asp7, Glu67, and Asp140 each coordinate Mg(2+).

It belongs to the RuvC family. Homodimer which binds Holliday junction (HJ) DNA. The HJ becomes 2-fold symmetrical on binding to RuvC with unstacked arms; it has a different conformation from HJ DNA in complex with RuvA. In the full resolvosome a probable DNA-RuvA(4)-RuvB(12)-RuvC(2) complex forms which resolves the HJ. Requires Mg(2+) as cofactor.

Its subcellular location is the cytoplasm. The catalysed reaction is Endonucleolytic cleavage at a junction such as a reciprocal single-stranded crossover between two homologous DNA duplexes (Holliday junction).. The RuvA-RuvB-RuvC complex processes Holliday junction (HJ) DNA during genetic recombination and DNA repair. Endonuclease that resolves HJ intermediates. Cleaves cruciform DNA by making single-stranded nicks across the HJ at symmetrical positions within the homologous arms, yielding a 5'-phosphate and a 3'-hydroxyl group; requires a central core of homology in the junction. The consensus cleavage sequence is 5'-(A/T)TT(C/G)-3'. Cleavage occurs on the 3'-side of the TT dinucleotide at the point of strand exchange. HJ branch migration catalyzed by RuvA-RuvB allows RuvC to scan DNA until it finds its consensus sequence, where it cleaves and resolves the cruciform DNA. The protein is Crossover junction endodeoxyribonuclease RuvC of Pseudothermotoga lettingae (strain ATCC BAA-301 / DSM 14385 / NBRC 107922 / TMO) (Thermotoga lettingae).